The chain runs to 499 residues: Putative antiporter subunit mnhD2 (499 aa).

A run of 14 helical transmembrane segments spans residues serine 3–threonine 23, isoleucine 32–valine 52, leucine 78–phenylalanine 98, tyrosine 108–serine 128, leucine 130–leucine 150, isoleucine 161–leucine 181, isoleucine 206–phenylalanine 226, leucine 240–phenylalanine 260, proline 273–tyrosine 293, isoleucine 308–phenylalanine 328, leucine 330–methionine 350, phenylalanine 368–glycine 388, glycine 403–phenylalanine 423, and threonine 450–methionine 470.

The protein belongs to the CPA3 antiporters (TC 2.A.63) subunit D family. As to quaternary structure, may form a heterooligomeric complex that consists of seven subunits: mnhA2, mnhB2, mnhC2, mnhD2, mnhE2, mnhF2 and mnhG2.

Its subcellular location is the cell membrane. This is Putative antiporter subunit mnhD2 (mnhD2) from Staphylococcus haemolyticus (strain JCSC1435).